A 443-amino-acid polypeptide reads, in one-letter code: Phenylalanine--tRNA ligase alpha subunit (443 aa).

L-phenylalanine contacts are provided by residues Thr-332, 375–377, and Tyr-415; that span reads QVE. Glu-417 provides a ligand contact to Mg(2+). Residue Phe-441 coordinates L-phenylalanine.

It belongs to the class-II aminoacyl-tRNA synthetase family. Phe-tRNA synthetase alpha subunit type 2 subfamily. As to quaternary structure, heterotetramer; dimer of two heterodimers formed by FARSA and FARSB. Requires Mg(2+) as cofactor.

It is found in the cytoplasm. It carries out the reaction tRNA(Phe) + L-phenylalanine + ATP = L-phenylalanyl-tRNA(Phe) + AMP + diphosphate + H(+). This Gallus gallus (Chicken) protein is Phenylalanine--tRNA ligase alpha subunit (FARSA).